We begin with the raw amino-acid sequence, 277 residues long: NH(3)-dependent NAD(+) synthetase (277 aa).

36–43 lines the ATP pocket; sequence GLSGGIDS. A Mg(2+)-binding site is contributed by aspartate 42. Arginine 118 serves as a coordination point for deamido-NAD(+). Residue threonine 138 coordinates ATP. Residue glutamate 143 coordinates Mg(2+). 2 residues coordinate ATP: lysine 167 and serine 189.

The protein belongs to the NAD synthetase family. As to quaternary structure, homodimer.

It catalyses the reaction deamido-NAD(+) + NH4(+) + ATP = AMP + diphosphate + NAD(+) + H(+). It participates in cofactor biosynthesis; NAD(+) biosynthesis; NAD(+) from deamido-NAD(+) (ammonia route): step 1/1. Functionally, catalyzes the ATP-dependent amidation of deamido-NAD to form NAD. Uses ammonia as a nitrogen source. This Chlorobium phaeobacteroides (strain DSM 266 / SMG 266 / 2430) protein is NH(3)-dependent NAD(+) synthetase.